The chain runs to 301 residues: Probable DNA-directed RNA polymerase III subunit rpc6 (301 aa).

This sequence belongs to the eukaryotic RPC34/RPC39 RNA polymerase subunit family. Component of the RNA polymerase III (Pol III) complex consisting of 17 subunits. Interacts with TFIIB.

The protein localises to the nucleus. Functionally, DNA-dependent RNA polymerase catalyzes the transcription of DNA into RNA using the four ribonucleoside triphosphates as substrates. Specific peripheric component of RNA polymerase III which synthesizes small RNAs, such as 5S rRNA and tRNAs. This is Probable DNA-directed RNA polymerase III subunit rpc6 (rpc6) from Schizosaccharomyces pombe (strain 972 / ATCC 24843) (Fission yeast).